The chain runs to 362 residues: Isopentenyl-diphosphate delta-isomerase (362 aa).

6-7 (RK) is a binding site for substrate. FMN contacts are provided by residues 65–67 (SIT), S95, and N124. 95–97 (SQR) contributes to the substrate binding site. Q158 provides a ligand contact to substrate. Mg(2+) is bound at residue E159. Residues K189, T219, 269 to 271 (GVR), and 290 to 291 (AL) each bind FMN.

The protein belongs to the IPP isomerase type 2 family. Homooctamer. Dimer of tetramers. Requires FMN as cofactor. NADPH serves as cofactor. The cofactor is Mg(2+).

Its subcellular location is the cytoplasm. It carries out the reaction isopentenyl diphosphate = dimethylallyl diphosphate. In terms of biological role, involved in the biosynthesis of isoprenoids. Catalyzes the 1,3-allylic rearrangement of the homoallylic substrate isopentenyl (IPP) to its allylic isomer, dimethylallyl diphosphate (DMAPP). The polypeptide is Isopentenyl-diphosphate delta-isomerase (Methanococcoides burtonii (strain DSM 6242 / NBRC 107633 / OCM 468 / ACE-M)).